A 108-amino-acid chain; its full sequence is Large ribosomal subunit protein eL33A (108 aa).

Belongs to the eukaryotic ribosomal protein eL33 family. As to quaternary structure, component of the large ribosomal subunit (LSU). Mature yeast ribosomes consist of a small (40S) and a large (60S) subunit. The 40S small subunit contains 1 molecule of ribosomal RNA (18S rRNA) and at least 33 different proteins. The large 60S subunit contains 3 rRNA molecules (25S, 5.8S and 5S rRNA) and at least 46 different proteins.

The protein resides in the cytoplasm. Its subcellular location is the nucleus. It localises to the nucleolus. Functionally, component of the ribosome, a large ribonucleoprotein complex responsible for the synthesis of proteins in the cell. The small ribosomal subunit (SSU) binds messenger RNAs (mRNAs) and translates the encoded message by selecting cognate aminoacyl-transfer RNA (tRNA) molecules. The large subunit (LSU) contains the ribosomal catalytic site termed the peptidyl transferase center (PTC), which catalyzes the formation of peptide bonds, thereby polymerizing the amino acids delivered by tRNAs into a polypeptide chain. The nascent polypeptides leave the ribosome through a tunnel in the LSU and interact with protein factors that function in enzymatic processing, targeting, and the membrane insertion of nascent chains at the exit of the ribosomal tunnel. The sequence is that of Large ribosomal subunit protein eL33A (rpl35b) from Schizosaccharomyces pombe (strain 972 / ATCC 24843) (Fission yeast).